The sequence spans 424 residues: Serine--tRNA ligase (424 aa).

230-232 (TAE) lines the L-serine pocket. Position 261–263 (261–263 (RSE)) interacts with ATP. Glu284 lines the L-serine pocket. ATP is bound at residue 348 to 351 (EISS). Ser384 is an L-serine binding site.

Belongs to the class-II aminoacyl-tRNA synthetase family. Type-1 seryl-tRNA synthetase subfamily. In terms of assembly, homodimer. The tRNA molecule binds across the dimer.

The protein localises to the cytoplasm. The catalysed reaction is tRNA(Ser) + L-serine + ATP = L-seryl-tRNA(Ser) + AMP + diphosphate + H(+). The enzyme catalyses tRNA(Sec) + L-serine + ATP = L-seryl-tRNA(Sec) + AMP + diphosphate + H(+). It participates in aminoacyl-tRNA biosynthesis; selenocysteinyl-tRNA(Sec) biosynthesis; L-seryl-tRNA(Sec) from L-serine and tRNA(Sec): step 1/1. Catalyzes the attachment of serine to tRNA(Ser). Is also able to aminoacylate tRNA(Sec) with serine, to form the misacylated tRNA L-seryl-tRNA(Sec), which will be further converted into selenocysteinyl-tRNA(Sec). This Streptococcus pneumoniae serotype 4 (strain ATCC BAA-334 / TIGR4) protein is Serine--tRNA ligase.